Here is a 514-residue protein sequence, read N- to C-terminus: 2-isopropylmalate synthase (514 aa).

The 263-residue stretch at 5-267 (VIIFDTTLRD…ETNIKHEEIH (263 aa)) folds into the Pyruvate carboxyltransferase domain. Mn(2+) is bound by residues Asp-14, His-202, His-204, and Asn-238. The interval 392–514 (KLNYLSVQSG…AEIKERIATV (123 aa)) is regulatory domain.

The protein belongs to the alpha-IPM synthase/homocitrate synthase family. LeuA type 1 subfamily. Homodimer. Mn(2+) is required as a cofactor.

It localises to the cytoplasm. The enzyme catalyses 3-methyl-2-oxobutanoate + acetyl-CoA + H2O = (2S)-2-isopropylmalate + CoA + H(+). It functions in the pathway amino-acid biosynthesis; L-leucine biosynthesis; L-leucine from 3-methyl-2-oxobutanoate: step 1/4. Catalyzes the condensation of the acetyl group of acetyl-CoA with 3-methyl-2-oxobutanoate (2-ketoisovalerate) to form 3-carboxy-3-hydroxy-4-methylpentanoate (2-isopropylmalate). In Photobacterium profundum (strain SS9), this protein is 2-isopropylmalate synthase.